The sequence spans 666 residues: Magnesium-chelatase 67 kDa subunit (666 aa).

37-44 (GRRGTGKT) contributes to the ATP binding site. The interval 327 to 367 (LPDEEEQMQPPPPPPPPPPPPEPDKPDDPETPPDEAPKDEQ) is disordered. Residues 335–347 (QPPPPPPPPPPPP) are compositionally biased toward pro residues. A VWFA domain is found at 475 to 661 (LIIFVVDASG…SLAETVKSGV (187 aa)).

This sequence belongs to the Mg-chelatase subunits D/I family.

The catalysed reaction is protoporphyrin IX + Mg(2+) + ATP + H2O = Mg-protoporphyrin IX + ADP + phosphate + 3 H(+). It participates in porphyrin-containing compound metabolism; bacteriochlorophyll biosynthesis. Its function is as follows. Involved in bacteriochlorophyll biosynthesis; introduces a magnesium ion into protoporphyrin IX to yield Mg-protoporphyrin IX. This chain is Magnesium-chelatase 67 kDa subunit (bchD), found in Heliobacterium mobile (Heliobacillus mobilis).